Consider the following 618-residue polypeptide: 1-deoxy-D-xylulose-5-phosphate synthase (618 aa).

Thiamine diphosphate contacts are provided by residues His75 and Gly116–Ser118. Residue Asp147 participates in Mg(2+) binding. Residues Gly148–Ala149, Asn176, Tyr283, and Glu364 each bind thiamine diphosphate. Mg(2+) is bound at residue Asn176.

Belongs to the transketolase family. DXPS subfamily. As to quaternary structure, homodimer. Mg(2+) serves as cofactor. It depends on thiamine diphosphate as a cofactor.

The catalysed reaction is D-glyceraldehyde 3-phosphate + pyruvate + H(+) = 1-deoxy-D-xylulose 5-phosphate + CO2. It participates in metabolic intermediate biosynthesis; 1-deoxy-D-xylulose 5-phosphate biosynthesis; 1-deoxy-D-xylulose 5-phosphate from D-glyceraldehyde 3-phosphate and pyruvate: step 1/1. Its function is as follows. Catalyzes the acyloin condensation reaction between C atoms 2 and 3 of pyruvate and glyceraldehyde 3-phosphate to yield 1-deoxy-D-xylulose-5-phosphate (DXP). The polypeptide is 1-deoxy-D-xylulose-5-phosphate synthase (Thiobacillus denitrificans (strain ATCC 25259 / T1)).